A 487-amino-acid chain; its full sequence is Acetyl-coenzyme A carboxylase carboxyl transferase subunit beta, chloroplastic (487 aa).

In terms of domain architecture, CoA carboxyltransferase N-terminal spans 223-487 (LWIQCDNCYG…FCPLNKTEIK (265 aa)). Zn(2+) is bound by residues C227, C230, C243, and C246. The segment at 227–246 (CDNCYGLMYKKVKMNVCEQC) adopts a C4-type zinc-finger fold.

This sequence belongs to the AccD/PCCB family. In terms of assembly, acetyl-CoA carboxylase is a heterohexamer composed of biotin carboxyl carrier protein, biotin carboxylase and 2 subunits each of ACCase subunit alpha and ACCase plastid-coded subunit beta (accD). The cofactor is Zn(2+).

Its subcellular location is the plastid. The protein resides in the chloroplast stroma. The catalysed reaction is N(6)-carboxybiotinyl-L-lysyl-[protein] + acetyl-CoA = N(6)-biotinyl-L-lysyl-[protein] + malonyl-CoA. It participates in lipid metabolism; malonyl-CoA biosynthesis; malonyl-CoA from acetyl-CoA: step 1/1. Functionally, component of the acetyl coenzyme A carboxylase (ACC) complex. Biotin carboxylase (BC) catalyzes the carboxylation of biotin on its carrier protein (BCCP) and then the CO(2) group is transferred by the transcarboxylase to acetyl-CoA to form malonyl-CoA. In Nasturtium officinale (Watercress), this protein is Acetyl-coenzyme A carboxylase carboxyl transferase subunit beta, chloroplastic.